A 206-amino-acid chain; its full sequence is 2,3-bisphosphoglycerate-dependent phosphoglycerate mutase (206 aa).

Residues 9-16 (RHGQSEWN), 22-23 (TG), Arg61, 88-91 (ERDY), Lys99, 115-116 (RR), and 159-160 (GN) each bind substrate. His10 serves as the catalytic Tele-phosphohistidine intermediate. Catalysis depends on Glu88, which acts as the Proton donor/acceptor.

The protein belongs to the phosphoglycerate mutase family. BPG-dependent PGAM subfamily. In terms of assembly, homodimer.

The catalysed reaction is (2R)-2-phosphoglycerate = (2R)-3-phosphoglycerate. Its pathway is carbohydrate degradation; glycolysis; pyruvate from D-glyceraldehyde 3-phosphate: step 3/5. In terms of biological role, catalyzes the interconversion of 2-phosphoglycerate and 3-phosphoglycerate. The sequence is that of 2,3-bisphosphoglycerate-dependent phosphoglycerate mutase from Brucella abortus (strain S19).